Consider the following 178-residue polypeptide: MNPLLQDYARILLEWNQTHNLSGAKCLSELEPQITDALKPLEFIKDFKSCLDIGSGAGLPAIPLALEKPEVKFILLEPRIKRAAFLNYLKSVLPLKNIEIIKKRLENYQSPLQVDLITSRAVASSSFLIEKSQRFLKDKGYFLFYKGEQLKDEIACKDTECFMHQKRVYFYKSKESLC.

S-adenosyl-L-methionine-binding positions include glycine 54, leucine 59, 105–106 (LE), and arginine 120.

It belongs to the methyltransferase superfamily. RNA methyltransferase RsmG family.

The protein localises to the cytoplasm. It catalyses the reaction guanosine(527) in 16S rRNA + S-adenosyl-L-methionine = N(7)-methylguanosine(527) in 16S rRNA + S-adenosyl-L-homocysteine. Its function is as follows. Specifically methylates the N7 position of guanine in position 527 of 16S rRNA. The polypeptide is Ribosomal RNA small subunit methyltransferase G (Helicobacter pylori (strain HPAG1)).